Reading from the N-terminus, the 202-residue chain is LexA repressor (202 aa).

A DNA-binding region (H-T-H motif) is located at residues 28 to 48; that stretch reads RAEIAQRLGFRSPNAAEEHLK. Residues S119 and K156 each act as for autocatalytic cleavage activity in the active site.

The protein belongs to the peptidase S24 family. In terms of assembly, homodimer.

It catalyses the reaction Hydrolysis of Ala-|-Gly bond in repressor LexA.. Its function is as follows. Represses a number of genes involved in the response to DNA damage (SOS response), including recA and lexA. Binds to the 16 bp palindromic sequence 5'-CTGTATATATATACAG-3'. In the presence of single-stranded DNA, RecA interacts with LexA causing an autocatalytic cleavage which disrupts the DNA-binding part of LexA, leading to derepression of the SOS regulon and eventually DNA repair. The protein is LexA repressor of Yersinia enterocolitica serotype O:8 / biotype 1B (strain NCTC 13174 / 8081).